The chain runs to 284 residues: Short chain dehydrogenase/reductase AacuD (284 aa).

Val37 is an NADP(+) binding site. Catalysis depends on proton donor residues Ser166 and Tyr180. Residues Tyr180, Lys184, and Thr215 each coordinate NADP(+). Lys184 (lowers pKa of active site Tyr) is an active-site residue.

Belongs to the short-chain dehydrogenases/reductases (SDR) family.

The protein operates within secondary metabolite biosynthesis. Its function is as follows. Short chain dehydrogenase/reductase; part of the gene cluster that mediates the biosynthesis of the tetrahydroxanthone dimer secalonic acid D. The pathway begins with the synthesis of atrochrysone thioester by the polyketide synthase AacuL. The atrochrysone carboxyl ACP thioesterase AacuM then breaks the thioester bond and releases the atrochrysone carboxylic acid from AacuL. Atrochrysone carboxylic acid is decarboxylated by the decarboxylase AacuI, and oxidized by the anthrone oxygenase AacuG to yield emodin. Emodin is then reduced to emodin hydroquinone by a yet unidentified oxidoreductase. A-ring reduction by the short chain dehydrogenase AacuN, dehydration by the scytalone dehydratase-like protein AacuK and probable spontaneous re-oxidation, results in overall deoxygenation to chrysophanol. Baeyer-Villiger oxidation by the Baeyer-Villiger monooxygenase (BVMO) AacuH then yields monodictyphenone. Monodictyphenone is transformed into compounds with the tetrahydroxanthone skeleton via methylesterification by the methyltransferase AacuQ, followed by the action of the flavin-dependent monooxygenase AacuC, the isomerase AacuP, and the short chain dehydrogenase/reductase AacuF or AacuD. AacuF and AacuD should accept the same compound as a substrate but perform the ketoreduction with a different stereoselectivity, thus yielding blennolides B and A, respectively. In the final step of the biosynthesis, the cytochrome P450 monooxygenase AacuE accepts blennolide B and/or blennolide A to conduct the dimerization reaction to furnish the tetrahydroxanthone dimers, secalonic acids D, B, and F. The sequence is that of Short chain dehydrogenase/reductase AacuD from Aspergillus aculeatus (strain ATCC 16872 / CBS 172.66 / WB 5094).